The chain runs to 1966 residues: Histone-lysine N-methyltransferase SETD1B (1966 aa).

Basic residues predominate over residues 1-12 (MENSHPPHHHHQ). Positions 1–26 (MENSHPPHHHHQQPPPQPGPSGERRN) are disordered. An interaction with WDR82 region spans residues 68–98 (VEDPRVVGIWTKNKELELSVPKFKIDEFYVG). The 89-residue stretch at 93–181 (DEFYVGPVPP…NIIHVELDTK (89 aa)) folds into the RRM domain. Disordered stretches follow at residues 235–302 (GCGS…LFSQ), 357–660 (VGGT…PKPM), 675–719 (LAPT…PPPA), 963–1462 (KVKR…SGPL), 1501–1541 (PPLL…RPPA), 1555–1606 (QPQT…KLPF), and 1636–1668 (AKSR…PQPL). Polar residues-rich tracts occupy residues 243–259 (VTPN…TAYS), 265–274 (TPNSYGQGTP), and 282–300 (PFSQ…SYLF). Composition is skewed to pro residues over residues 432-441 (PAPPPLPPAE) and 449-458 (GTPPGPPPPD). Residues 493–521 (EKPHDSLDSRIEMLLKEQRTKLLFLREPD) show a composition bias toward basic and acidic residues. Residues 531-543 (SPISSSSSQLSPL) show a composition bias toward low complexity. Residues 592 to 603 (PRPPPEPGPPDP) are compositionally biased toward pro residues. Positions 637-646 (EDMEISDDEM) are enriched in acidic residues. Over residues 679–719 (LPLPPPPGFPPLPPPPPPPPPQPGFPMPPPLPPPPPPPPPA) the composition is skewed to pro residues. Phosphoserine is present on residues Ser986 and Ser994. Residues 995 to 1015 (ERERDRDMADTPCELAKRDPK) show a composition bias toward basic and acidic residues. Ser1031 is subject to Phosphoserine. Residues 1041–1064 (LSASSSSSASSSSGSSTTSPSSSA) are compositionally biased toward low complexity. Composition is skewed to acidic residues over residues 1067-1087 (KEEE…EEEE) and 1104-1142 (KDDD…EEET). Over residues 1148–1174 (SKAEATSSSESSESSEFESSSESSPSS) the composition is skewed to low complexity. Residues 1173–1204 (SSSEDEEEVVAREEEEEEEEEEMVAEESMASA) are a coiled coil. 2 stretches are compositionally biased toward acidic residues: residues 1175-1197 (SEDE…EMVA) and 1229-1238 (GMEEEVDIET). Phosphoserine is present on residues Ser1265, Ser1283, and Ser1335. The segment covering 1312–1340 (EPPMMLPLPLQPPLPPPRPPRPPSPPPEP) has biased composition (pro residues). The span at 1383-1425 (PGGEPPLSGGSSGLSLSSPQVPGSPFSYPAPSPSLSSGGLPRT) shows a compositional bias: low complexity. Pro residues predominate over residues 1501 to 1514 (PPLLPAPLASCPPP). Basic residues predominate over residues 1515–1524 (MKRKPGRPRR). The segment covering 1580 to 1600 (PAPPPPLPPQPPPPPPPPPVE) has biased composition (pro residues). A phosphoserine mark is found at Ser1659 and Ser1663. A WDR5 interaction motif (WIN) motif is present at residues 1745–1750 (GCARSE). The segment at 1767-1800 (SRASTDEPPADTQGMSIPAQPHASTRAGSERRSE) is disordered. The RxxxRR motif motif lies at 1798-1803 (RSEQRR). In terms of domain architecture, SET spans 1827–1944 (KKLKFCKSHI…VNEEITYDYK (118 aa)). Tyr1943 lines the S-adenosyl-L-methionine pocket. The Post-SET domain occupies 1950-1966 (VKIPCLCGSENCRGTLN).

It belongs to the class V-like SAM-binding methyltransferase superfamily. Component of the SET1B/COMPASS complex composed of the catalytic subunit SETD1B, WDR5, WDR82, RBBP5, ASH2L/ASH2, CXXC1/CFP1, HCFC1, DPY30 homotrimer and BOD1. Forms a core complex with the evolutionary conserved subcomplex WRAD composed of WDR5, RBBP5, ASH2L/ASH2 and DPY30 subunits; WRAD differentially stimulates the methyltransferase activity. Interacts with HCFC1 and ASH2L/ASH2. Interacts (via N-terminal region) with WDR82. Interacts (via the RRM domain) with hyperphosphorylated C-terminal domain (CTD) of RNA polymerase II large subunit (POLR2A) only in the presence of WDR82. Binds specifically to CTD heptad repeats phosphorylated on 'Ser-5' of each heptad. Interacts with RBM15. Interacts (via WIN motif) with WDR5.

Its subcellular location is the nucleus. The protein localises to the nucleus speckle. It localises to the chromosome. It is found in the cytoplasm. The catalysed reaction is L-lysyl(4)-[histone H3] + S-adenosyl-L-methionine = N(6)-methyl-L-lysyl(4)-[histone H3] + S-adenosyl-L-homocysteine + H(+). It catalyses the reaction N(6)-methyl-L-lysyl(4)-[histone H3] + S-adenosyl-L-methionine = N(6),N(6)-dimethyl-L-lysyl(4)-[histone H3] + S-adenosyl-L-homocysteine + H(+). It carries out the reaction N(6),N(6)-dimethyl-L-lysyl(4)-[histone H3] + S-adenosyl-L-methionine = N(6),N(6),N(6)-trimethyl-L-lysyl(4)-[histone H3] + S-adenosyl-L-homocysteine + H(+). Its function is as follows. Histone methyltransferase that catalyzes methyl group transfer from S-adenosyl-L-methionine to the epsilon-amino group of 'Lys-4' of histone H3 (H3K4) via a non-processive mechanism. Part of chromatin remodeling machinery, forms H3K4me1, H3K4me2 and H3K4me3 methylation marks at active chromatin sites where transcription and DNA repair take place. Plays an essential role in regulating the transcriptional programming of multipotent hematopoietic progenitor cells and lymphoid lineage specification during hematopoiesis. This Homo sapiens (Human) protein is Histone-lysine N-methyltransferase SETD1B (SETD1B).